The primary structure comprises 228 residues: Protein slowmo homolog (228 aa).

A PRELI/MSF1 domain is found at 1 to 172; that stretch reads MPLFETIKHT…TIIKVQKEAE (172 aa).

Belongs to the slowmo family.

This Dictyostelium discoideum (Social amoeba) protein is Protein slowmo homolog (slmo).